A 500-amino-acid chain; its full sequence is LEM protein 2 (500 aa).

In terms of domain architecture, LEM spans 1-45 (MVDVEKMSDAELRAELNVRGANVGPVTGTTRSLYEKKLKKLLSGG). The Nuclear portion of the chain corresponds to 1-325 (MVDVEKMSDA…VKQTNIFNEA (325 aa)). The interval 39-202 (KKLLSGGAKT…RRITSVPGLI (164 aa)) is disordered. The span at 46 to 57 (AKTPARPTVAKP) shows a compositional bias: low complexity. Residues 58 to 75 (APKPTPKSAPAPKSPKSP) show a composition bias toward pro residues. A compositionally biased stretch (low complexity) spans 77–89 (ARRSIPRAAATAA). A compositionally biased stretch (acidic residues) spans 103–122 (EEMSDSDDDMRDDDDDDEEI). 2 stretches are compositionally biased toward low complexity: residues 130-141 (SSFRSANSTASS) and 168-197 (NTPRTTSSSSKTTINTTTTRIPSTPRRITS). The chain crosses the membrane as a helical span at residues 326–346 (IYFALYVILILFVVLGIAYAL). Topologically, residues 347-378 (TTTHRPKTADFSGYWGVLKAAGRDSLNFFYNY) are perinuclear space. A helical transmembrane segment spans residues 379–399 (AILPVVSLGIFVVLGAGIYFG). The Nuclear segment spans residues 400–500 (HRKYKEAKEQ…WIGNQSQKRW (101 aa)).

As to quaternary structure, interacts with lmn-1. Interacts (via LEM domain and the C-terminal nuclear domain) with baf-1. In terms of tissue distribution, ubiquitous. High expression in germline and intestine.

It localises to the nucleus inner membrane. The protein localises to the nucleus envelope. The protein resides in the chromosome. Nuclear lamina-associated inner nuclear membrane protein that is involved in cell division, nuclear structure organization, maintenance of nuclear envelope integrity and nuclear envelope reformation after mitosis. In interphase cells, plays a role in anchoring and spatial arrangement of chromosome arms at the nuclear periphery, forming so-called lem-2 subdomains. Both arms of autosomes but only the left arm of the X chromosome are anchored in lem-2 subdomains; sequences bound by lem-2 are mainly repetitive chromosome sequences and inactive genes. Involved in chromosome segregation and cell division, probably via its interaction with the nuclear intermediate filament protein lmn-1, the main component of nuclear lamina. Required to organize the distribution of lmn-1, nuclear pore complexes (NPCs) and chromatin in mitotically active cells. Involved in the nuclear positioning and efficient anchoring of microtubule-organizing centers (MTOCs) to the nuclear envelope during mitosis as well as on maintaining correct nuclear morphology. Contributes to closure of nuclear envelope (NE) holes and prevents excess nuclear membranes after meiosis and mitosis. Together with emr-1, plays a role in baf-1 enrichment at the nuclear envelope in anaphase. Together with emr-1, involved in muscle cell attachment to hypodermal cells, as well as muscle cell location and sarcomere organization. May play a role in radiation-induced DNA damage repair response. The protein is LEM protein 2 (lem-2) of Caenorhabditis elegans.